Reading from the N-terminus, the 131-residue chain is Large ribosomal subunit protein bL17 (131 aa).

The protein belongs to the bacterial ribosomal protein bL17 family. Part of the 50S ribosomal subunit. Contacts protein L32.

The protein is Large ribosomal subunit protein bL17 of Sodalis glossinidius (strain morsitans).